Here is a 643-residue protein sequence, read N- to C-terminus: Transmembrane 9 superfamily member 4 (643 aa).

A signal peptide spans Met1 to Thr23. At Phe24–Phe282 the chain is on the extracellular side. Residues Ser283–Ile303 form a helical membrane-spanning segment. At Arg304 to Ser347 the chain is on the cytoplasmic side. A Phosphotyrosine modification is found at Tyr313. The chain crosses the membrane as a helical span at residues Leu348–Leu368. Over Gly369–Gly377 the chain is Extracellular. Residues Ala378–Ala398 form a helical membrane-spanning segment. Topologically, residues Gly399 to Thr417 are cytoplasmic. Residues Ala418 to Gly438 form a helical membrane-spanning segment. Residues Lys439 to Met450 lie on the Extracellular side of the membrane. A helical transmembrane segment spans residues Val451–Phe471. At Gly472–Val502 the chain is on the cytoplasmic side. The helical transmembrane segment at Gly503–Phe523 threads the bilayer. Topologically, residues Ser524–Gly536 are extracellular. Residues Phe537 to Val557 form a helical membrane-spanning segment. The Cytoplasmic segment spans residues Tyr558–Arg571. Residues Asn572–Val592 form a helical membrane-spanning segment. The Extracellular portion of the chain corresponds to Asn593–Glu599. The helical transmembrane segment at Phe600 to Leu620 threads the bilayer. Topologically, residues Thr621 to Asp643 are cytoplasmic.

Belongs to the nonaspanin (TM9SF) (TC 9.A.2) family.

The protein resides in the membrane. It is found in the golgi apparatus. It localises to the early endosome. Its function is as follows. Associates with proteins harboring glycine-rich transmembrane domains and ensures their efficient localization to the cell surface. The polypeptide is Transmembrane 9 superfamily member 4 (Tm9sf4) (Rattus norvegicus (Rat)).